The primary structure comprises 364 residues: D-alanine--D-alanine ligase (364 aa).

The 211-residue stretch at 134-344 (KVLLKSFNIP…YESLVDKLIT (211 aa)) folds into the ATP-grasp domain. 167–222 (NNKLNYPVIVKPSVLGSSIGINVAYNVSQIEKYIEEAFEYDLTVVVEKFIKAREIE) serves as a coordination point for ATP. 3 residues coordinate Mg(2+): Asp297, Glu311, and Asn313.

Belongs to the D-alanine--D-alanine ligase family. Mg(2+) is required as a cofactor. Mn(2+) serves as cofactor.

Its subcellular location is the cytoplasm. The enzyme catalyses 2 D-alanine + ATP = D-alanyl-D-alanine + ADP + phosphate + H(+). It participates in cell wall biogenesis; peptidoglycan biosynthesis. Its function is as follows. Cell wall formation. This chain is D-alanine--D-alanine ligase, found in Borrelia duttonii (strain Ly).